We begin with the raw amino-acid sequence, 312 residues long: Ribosomal RNA small subunit methyltransferase H (312 aa).

S-adenosyl-L-methionine-binding positions include 34-36 (AGH), D54, F81, D102, and Q109.

This sequence belongs to the methyltransferase superfamily. RsmH family.

The protein localises to the cytoplasm. It carries out the reaction cytidine(1402) in 16S rRNA + S-adenosyl-L-methionine = N(4)-methylcytidine(1402) in 16S rRNA + S-adenosyl-L-homocysteine + H(+). Functionally, specifically methylates the N4 position of cytidine in position 1402 (C1402) of 16S rRNA. This is Ribosomal RNA small subunit methyltransferase H from Citrifermentans bemidjiense (strain ATCC BAA-1014 / DSM 16622 / JCM 12645 / Bem) (Geobacter bemidjiensis).